Reading from the N-terminus, the 147-residue chain is Small ribosomal subunit protein uS13 (147 aa).

Positions 115 to 147 (SYKGRRHEAGLPVRGQRTKSTFRNSSSVGVKRS) are disordered. The segment covering 132–147 (TKSTFRNSSSVGVKRS) has biased composition (polar residues).

It belongs to the universal ribosomal protein uS13 family. In terms of assembly, part of the 30S ribosomal subunit. Forms a loose heterodimer with protein S19. Forms two bridges to the 50S subunit in the 70S ribosome.

Its function is as follows. Located at the top of the head of the 30S subunit, it contacts several helices of the 16S rRNA. In the 70S ribosome it contacts the 23S rRNA (bridge B1a) and protein L5 of the 50S subunit (bridge B1b), connecting the 2 subunits; these bridges are implicated in subunit movement. In Methanobrevibacter smithii (strain ATCC 35061 / DSM 861 / OCM 144 / PS), this protein is Small ribosomal subunit protein uS13.